A 251-amino-acid chain; its full sequence is Triosephosphate isomerase (251 aa).

12 to 14 (NWK) is a substrate binding site. The active-site Electrophile is H99. Catalysis depends on E169, which acts as the Proton acceptor. Substrate contacts are provided by residues G175, S214, and 235–236 (GG).

This sequence belongs to the triosephosphate isomerase family. As to quaternary structure, homodimer.

The protein localises to the cytoplasm. It carries out the reaction D-glyceraldehyde 3-phosphate = dihydroxyacetone phosphate. It participates in carbohydrate biosynthesis; gluconeogenesis. The protein operates within carbohydrate degradation; glycolysis; D-glyceraldehyde 3-phosphate from glycerone phosphate: step 1/1. Its function is as follows. Involved in the gluconeogenesis. Catalyzes stereospecifically the conversion of dihydroxyacetone phosphate (DHAP) to D-glyceraldehyde-3-phosphate (G3P). This chain is Triosephosphate isomerase, found in Bradyrhizobium sp. (strain ORS 278).